Here is a 469-residue protein sequence, read N- to C-terminus: Putative dipeptidase SAUSA300_1697 (469 aa).

His-84 is a binding site for Zn(2+). Asp-86 is a catalytic residue. Asp-115 provides a ligand contact to Zn(2+). Residue Glu-149 is the Proton acceptor of the active site. Glu-150, Asp-173, and His-440 together coordinate Zn(2+).

It belongs to the peptidase M20A family. Requires Zn(2+) as cofactor.

This is Putative dipeptidase SAUSA300_1697 from Staphylococcus aureus (strain USA300).